We begin with the raw amino-acid sequence, 359 residues long: Acidic skeletal organic matrix protein (359 aa).

The first 26 residues, 1 to 26 (MLAPRLAFVLLLSSYFGSILITSVES), serve as a signal peptide directing secretion. 2 disordered regions span residues 60–83 (FEEDDDDDDDEDNEESENEVEDFD) and 224–254 (SEAEDPEEVDDAKRAETGKDPICVDPDDPNE). Residues 66-89 (DDDDEDNEESENEVEDFDDENALS) are a coiled coil.

As to expression, component of the acid-insoluble and acid-soluble organic matrix of the aragonitic skeleton (at protein level).

The protein localises to the secreted. This Acropora millepora (Staghorn coral) protein is Acidic skeletal organic matrix protein.